Consider the following 275-residue polypeptide: MFRYLFVLSRPRFWLYLAGPVLVGVSYGATTVGELFSAPAVVLFSYFLLPANIYLYGINDVFDRDVDETNPKKDGRESRYRGGAAVAVIVAVCGVFLGFVAAPLPAEAWPYLAAWFVLATEYSAPPLRFKTTPVLDSLSNGLYVLPAAAAYAGVSGTHPPLLAVAGGWLWAMGMHTFSAIPDIEPDRAAGIQTTATALGADRALAYCAGIWLLSAAVFALVDVRFGLLLLAYPVLVFGIRRLQVAVGRAYWWYPAVNTLVGMVFTLGGLWGVVHG.

9 helical membrane-spanning segments follow: residues 13–33, 38–58, 84–104, 107–127, 134–154, 160–180, 203–223, 225–245, and 253–273; these read FWLYLAGPVLVGVSYGATTVG, APAVVLFSYFLLPANIYLYGI, AAVAVIVAVCGVFLGFVAAPL, EAWPYLAAWFVLATEYSAPPL, VLDSLSNGLYVLPAAAAYAGV, PLLAVAGGWLWAMGMHTFSAI, ALAYCAGIWLLSAAVFALVDV, FGLLLLAYPVLVFGIRRLQVA, and YPAVNTLVGMVFTLGGLWGVV.

The protein belongs to the UbiA prenyltransferase family.

It is found in the cell membrane. It catalyses the reaction all-trans-lycopene + dimethylallyl diphosphate + H2O = dihydroisopentenyldehydrorhodopin + diphosphate. The enzyme catalyses isopentenyldehydrorhodopin + dimethylallyl diphosphate + H2O = dihydrobisanhydrobacterioruberin + diphosphate. Its pathway is carotenoid biosynthesis. Its activity is regulated as follows. Inhibited by bacterioopsin. In terms of biological role, involved in the biosynthesis of the acyclic C50 carotenoid bacterioruberin (BR). Acts as a bifunctional elongase/hydratase that catalyzes the elongation of lycopene by attaching a C(5) isoprene unit at C-2, as well as the hydroxylation of the previous end of the molecule. The enzyme acts at both ends of the substrate, and catalyzes the conversion of lycopene to the C(45) intermediate dihydroisopentenyldehydrorhodopin (DH-IDR) and the conversion of isopentenyldehydrorhodopin (IDR) to the C(50) carotenoid dihydrobisanhydrobacterioruberin (DH-BABR). Can also catalyze the conversion of lycopene to tetrahydrobisanhydrobacterioruberin (TH-BABR). The chain is Lycopene elongase/hydratase from Halobacterium salinarum (strain ATCC 700922 / JCM 11081 / NRC-1) (Halobacterium halobium).